Reading from the N-terminus, the 339-residue chain is Ketol-acid reductoisomerase (NADP(+)) (339 aa).

The KARI N-terminal Rossmann domain maps to 1–182 (MRVYYDRDAD…GGGRSGIIET (182 aa)). NADP(+) is bound by residues 24 to 27 (YGSQ), K48, S51, T53, and 83 to 86 (DELQ). Residue H108 is part of the active site. Position 134 (G134) interacts with NADP(+). In terms of domain architecture, KARI C-terminal knotted spans 183–328 (NFKEECETDL…AKLRGMMPWI (146 aa)). Residues D191, E195, E227, and E231 each coordinate Mg(2+). Position 252 (S252) interacts with substrate.

Belongs to the ketol-acid reductoisomerase family. Mg(2+) is required as a cofactor.

It carries out the reaction (2R)-2,3-dihydroxy-3-methylbutanoate + NADP(+) = (2S)-2-acetolactate + NADPH + H(+). It catalyses the reaction (2R,3R)-2,3-dihydroxy-3-methylpentanoate + NADP(+) = (S)-2-ethyl-2-hydroxy-3-oxobutanoate + NADPH + H(+). Its pathway is amino-acid biosynthesis; L-isoleucine biosynthesis; L-isoleucine from 2-oxobutanoate: step 2/4. It functions in the pathway amino-acid biosynthesis; L-valine biosynthesis; L-valine from pyruvate: step 2/4. Involved in the biosynthesis of branched-chain amino acids (BCAA). Catalyzes an alkyl-migration followed by a ketol-acid reduction of (S)-2-acetolactate (S2AL) to yield (R)-2,3-dihydroxy-isovalerate. In the isomerase reaction, S2AL is rearranged via a Mg-dependent methyl migration to produce 3-hydroxy-3-methyl-2-ketobutyrate (HMKB). In the reductase reaction, this 2-ketoacid undergoes a metal-dependent reduction by NADPH to yield (R)-2,3-dihydroxy-isovalerate. The protein is Ketol-acid reductoisomerase (NADP(+)) of Sinorhizobium fredii (strain NBRC 101917 / NGR234).